The chain runs to 270 residues: MEQMAHPSSTPLLVAEIGNTTAMFAVFSGTDPIDSLQVATAALSSPEAVGELLQPLLARHSLAADAVISSVVPRAGEAAGRWLLDILPGRVLAVDSTLNLPFRISYDPPSALGADRLSLCARCCMLEEEAAVIALDIGTAITFDVLSADRSYLGGLIMPGLELMASALHERTAQLPRVEVSRPERLMGLSTADCIRSGVVWGCVLQVEGLVRKIRGWLRSEHGEGYARVVATGGRAPLIVSMMEMPPLLDPHAVSRGARYLFELNRITVS.

Residue 16 to 23 (EIGNTTAM) coordinates ATP. Substrate-binding positions include Y106 and 113–116 (GADR). The active-site Proton acceptor is the D115. D136 provides a ligand contact to K(+). T139 lines the ATP pocket. Residue T191 coordinates substrate.

Belongs to the type III pantothenate kinase family. As to quaternary structure, homodimer. NH4(+) serves as cofactor. K(+) is required as a cofactor.

It is found in the cytoplasm. It catalyses the reaction (R)-pantothenate + ATP = (R)-4'-phosphopantothenate + ADP + H(+). It participates in cofactor biosynthesis; coenzyme A biosynthesis; CoA from (R)-pantothenate: step 1/5. In terms of biological role, catalyzes the phosphorylation of pantothenate (Pan), the first step in CoA biosynthesis. This chain is Type III pantothenate kinase, found in Chlorobium luteolum (strain DSM 273 / BCRC 81028 / 2530) (Pelodictyon luteolum).